Reading from the N-terminus, the 65-residue chain is MPSVNVRDMDSFEAALKMFKKQCEREGILSEIKKREHYEKPSVKRKKKVLAARKKLAKKMKMLSR.

It belongs to the bacterial ribosomal protein bS21 family.

This is Small ribosomal subunit protein bS21 from Thermodesulfovibrio yellowstonii (strain ATCC 51303 / DSM 11347 / YP87).